Here is a 206-residue protein sequence, read N- to C-terminus: Thiamine-phosphate synthase (206 aa).

4-amino-2-methyl-5-(diphosphooxymethyl)pyrimidine-binding positions include 37–41 (QYRNK) and asparagine 69. The Mg(2+) site is built by aspartate 70 and aspartate 89. Residue serine 108 participates in 4-amino-2-methyl-5-(diphosphooxymethyl)pyrimidine binding. 135-137 (SST) is a 2-[(2R,5Z)-2-carboxy-4-methylthiazol-5(2H)-ylidene]ethyl phosphate binding site. Residue lysine 138 participates in 4-amino-2-methyl-5-(diphosphooxymethyl)pyrimidine binding. 2-[(2R,5Z)-2-carboxy-4-methylthiazol-5(2H)-ylidene]ethyl phosphate-binding positions include glycine 165 and 185 to 186 (IS).

The protein belongs to the thiamine-phosphate synthase family. Requires Mg(2+) as cofactor.

The catalysed reaction is 2-[(2R,5Z)-2-carboxy-4-methylthiazol-5(2H)-ylidene]ethyl phosphate + 4-amino-2-methyl-5-(diphosphooxymethyl)pyrimidine + 2 H(+) = thiamine phosphate + CO2 + diphosphate. It catalyses the reaction 2-(2-carboxy-4-methylthiazol-5-yl)ethyl phosphate + 4-amino-2-methyl-5-(diphosphooxymethyl)pyrimidine + 2 H(+) = thiamine phosphate + CO2 + diphosphate. It carries out the reaction 4-methyl-5-(2-phosphooxyethyl)-thiazole + 4-amino-2-methyl-5-(diphosphooxymethyl)pyrimidine + H(+) = thiamine phosphate + diphosphate. Its pathway is cofactor biosynthesis; thiamine diphosphate biosynthesis; thiamine phosphate from 4-amino-2-methyl-5-diphosphomethylpyrimidine and 4-methyl-5-(2-phosphoethyl)-thiazole: step 1/1. Functionally, condenses 4-methyl-5-(beta-hydroxyethyl)thiazole monophosphate (THZ-P) and 2-methyl-4-amino-5-hydroxymethyl pyrimidine pyrophosphate (HMP-PP) to form thiamine monophosphate (TMP). This is Thiamine-phosphate synthase from Azoarcus sp. (strain BH72).